The chain runs to 417 residues: Equilibrative nucleotide transporter 7 (417 aa).

11 helical membrane-spanning segments follow: residues 19-39 (LVCC…LTIT), 54-74 (VLTI…ATKE), 84-104 (IFGY…DLAS), 110-130 (VVAY…DAFV), 143-163 (PDFI…TSVL), 184-204 (LFIG…TLVF), 264-284 (LGIN…GFLY), 293-315 (GDWY…RFIP), 326-346 (KWIT…YFTA), 353-373 (WMLF…VCIF), and 392-412 (MCVF…LWLI).

This sequence belongs to the SLC29A/ENT transporter (TC 2.A.57) family. As to expression, expressed in leaves and flowers.

The protein localises to the cell membrane. Nucleoside transporter that can mediate uptake of adenosine, uridine, guanosine or cytidine when expressed in a heterologous system (yeast). In Arabidopsis thaliana (Mouse-ear cress), this protein is Equilibrative nucleotide transporter 7 (ENT7).